Reading from the N-terminus, the 405-residue chain is Riboflavin biosynthesis protein RibBA (405 aa).

The segment at 1–205 (MEQIKLDSIA…IKDLIEYRLT (205 aa)) is DHBP synthase. D-ribulose 5-phosphate is bound by residues 30–31 (RE), aspartate 35, 144–148 (RVGHT), and glutamate 168. A Mg(2+)-binding site is contributed by glutamate 31. Position 147 (histidine 147) interacts with Mg(2+). Residues 206 to 405 (HESLVKREIG…KMGHTILKKD (200 aa)) are GTP cyclohydrolase II. 256-260 (RVHSS) contributes to the GTP binding site. Zn(2+)-binding residues include cysteine 261, cysteine 272, and cysteine 274. GTP-binding positions include glutamine 277, 299-301 (EGR), and threonine 321. The active-site Proton acceptor; for GTP cyclohydrolase activity is aspartate 333. Arginine 335 functions as the Nucleophile; for GTP cyclohydrolase activity in the catalytic mechanism. Positions 356 and 361 each coordinate GTP.

This sequence in the N-terminal section; belongs to the DHBP synthase family. It in the C-terminal section; belongs to the GTP cyclohydrolase II family. Mg(2+) is required as a cofactor. Mn(2+) serves as cofactor. Requires Zn(2+) as cofactor.

The enzyme catalyses D-ribulose 5-phosphate = (2S)-2-hydroxy-3-oxobutyl phosphate + formate + H(+). It catalyses the reaction GTP + 4 H2O = 2,5-diamino-6-hydroxy-4-(5-phosphoribosylamino)-pyrimidine + formate + 2 phosphate + 3 H(+). Its pathway is cofactor biosynthesis; riboflavin biosynthesis; 2-hydroxy-3-oxobutyl phosphate from D-ribulose 5-phosphate: step 1/1. The protein operates within cofactor biosynthesis; riboflavin biosynthesis; 5-amino-6-(D-ribitylamino)uracil from GTP: step 1/4. Catalyzes the conversion of D-ribulose 5-phosphate to formate and 3,4-dihydroxy-2-butanone 4-phosphate. Functionally, catalyzes the conversion of GTP to 2,5-diamino-6-ribosylamino-4(3H)-pyrimidinone 5'-phosphate (DARP), formate and pyrophosphate. This chain is Riboflavin biosynthesis protein RibBA, found in Cytophaga hutchinsonii (strain ATCC 33406 / DSM 1761 / CIP 103989 / NBRC 15051 / NCIMB 9469 / D465).